A 34-amino-acid chain; its full sequence is DCTRMFGACRRDSDCCPHLGCKPTSKYCAWDGTI.

Disulfide bonds link cysteine 2–cysteine 16, cysteine 9–cysteine 21, and cysteine 15–cysteine 28. Isoleucine amide is present on isoleucine 34.

This sequence belongs to the neurotoxin 10 (Hwtx-1) family. 57 (ScTx1) subfamily. In terms of tissue distribution, expressed by the venom gland.

The protein resides in the secreted. Acts as a gating-modifier to inhibit voltage-gated potassium channels. It inhibits delayed Kv2.1/KCNB1 (IC(50) is 12.7 nM), Kv2.1/Kv9.3 (IC(50) is 7.2 nM) (KCNB1/KCNS3), Kv2.2/KCNB2 (IC(50) is 21.4 nM), and transient Kv4.2/KCND2 (IC(50) is 1.2 nM) channels. The polypeptide is Kappa-theraphotoxin-Sc1a (Stromatopelma calceatum (Featherleg baboon tarantula)).